Here is a 398-residue protein sequence, read N- to C-terminus: DNA replication and repair protein RecF (398 aa).

30–37 contributes to the ATP binding site; that stretch reads GSNGLGKT.

The protein belongs to the RecF family.

It is found in the cytoplasm. The RecF protein is involved in DNA metabolism; it is required for DNA replication and normal SOS inducibility. RecF binds preferentially to single-stranded, linear DNA. It also seems to bind ATP. The protein is DNA replication and repair protein RecF of Renibacterium salmoninarum (strain ATCC 33209 / DSM 20767 / JCM 11484 / NBRC 15589 / NCIMB 2235).